Consider the following 588-residue polypeptide: Sentrin-specific protease 2 (588 aa).

The short motif at lysine 28–arginine 31 is the Nuclear localization signal element. At serine 32 the chain carries Phosphoserine. Positions proline 47–arginine 52 match the Nuclear localization signal motif. The disordered stretch occupies residues glutamate 157–glutamine 184. Polar residues predominate over residues asparagine 172–glutamine 184. The Nuclear export signal signature appears at methionine 316–glycine 331. 2 positions are modified to phosphoserine: serine 332 and serine 343. Residues leucine 394–isoleucine 558 form a protease region. Residues histidine 477 and aspartate 494 contribute to the active site. The active-site Nucleophile is cysteine 547.

It belongs to the peptidase C48 family. Binds to SUMO2 and SUMO3. Interacts with the C-terminal domain of NUP153 via its N-terminus. Interacts with MTA1. Polyubiquitinated; which leads to proteasomal degradation. Highly expressed in testis. Detected in brain, heart and thymus.

Its subcellular location is the nucleus. The protein localises to the nuclear pore complex. It is found in the nucleus membrane. It localises to the cytoplasm. The protein resides in the cytoplasmic vesicle. Its subcellular location is the PML body. In terms of biological role, protease that catalyzes two essential functions in the SUMO pathway. The first is the hydrolysis of an alpha-linked peptide bond at the C-terminal end of the small ubiquitin-like modifier (SUMO) propeptides, SUMO1, SUMO2 and SUMO3 leading to the mature form of the proteins. The second is the deconjugation of SUMO1, SUMO2 and SUMO3 from targeted proteins, by cleaving an epsilon-linked peptide bond between the C-terminal glycine of the mature SUMO and the lysine epsilon-amino group of the target protein. May down-regulate CTNNB1 levels and thereby modulate the Wnt pathway. Deconjugates SUMO2 from MTA1. Plays a dynamic role in adipogenesis by desumoylating and promoting the stabilization of CEBPB. Acts as a regulator of the cGAS-STING pathway by catalyzing desumoylation of CGAS and STING1 during the late phase of viral infection. Functionally, activates transcription. In Mus musculus (Mouse), this protein is Sentrin-specific protease 2 (Senp2).